The following is a 107-amino-acid chain: Large ribosomal subunit protein uL24 (107 aa).

Belongs to the universal ribosomal protein uL24 family. As to quaternary structure, part of the 50S ribosomal subunit.

Functionally, one of two assembly initiator proteins, it binds directly to the 5'-end of the 23S rRNA, where it nucleates assembly of the 50S subunit. In terms of biological role, one of the proteins that surrounds the polypeptide exit tunnel on the outside of the subunit. The polypeptide is Large ribosomal subunit protein uL24 (Gluconacetobacter diazotrophicus (strain ATCC 49037 / DSM 5601 / CCUG 37298 / CIP 103539 / LMG 7603 / PAl5)).